The primary structure comprises 105 residues: Thioredoxin (105 aa).

The 105-residue stretch at 1-105 (MASNVTDKSF…SLIEWINNNI (105 aa)) folds into the Thioredoxin domain. C30 and C33 are oxidised to a cystine.

It belongs to the thioredoxin family.

Component of the thioredoxin-thioredoxin reductase system. Participates in various redox reactions through the reversible oxidation of its active center dithiol to a disulfide and catalyzes dithiol-disulfide exchange reactions. In Rickettsia bellii (strain RML369-C), this protein is Thioredoxin (trxA).